We begin with the raw amino-acid sequence, 293 residues long: ELMO domain-containing protein 2 (293 aa).

One can recognise an ELMO domain in the interval 126–282; sequence QHEKMLLKLW…KFHERIKGLL (157 aa).

Functionally, acts as a GTPase-activating protein (GAP) toward guanine nucleotide exchange factors like ARL2, ARL3, ARF1 and ARF6, but not for GTPases outside the Arf family. In Mus musculus (Mouse), this protein is ELMO domain-containing protein 2 (Elmod2).